The sequence spans 876 residues: Leucine--tRNA ligase (876 aa).

Residues 42–52 (PYPSGKLHMGH) carry the 'HIGH' region motif. The 'KMSKS' region signature appears at 634-638 (KMSKS). Lys637 serves as a coordination point for ATP.

Belongs to the class-I aminoacyl-tRNA synthetase family.

It localises to the cytoplasm. The catalysed reaction is tRNA(Leu) + L-leucine + ATP = L-leucyl-tRNA(Leu) + AMP + diphosphate. This chain is Leucine--tRNA ligase, found in Neisseria meningitidis serogroup C (strain 053442).